The chain runs to 384 residues: Succinyl-diaminopimelate desuccinylase (384 aa).

Residue His71 coordinates Zn(2+). Asp73 is a catalytic residue. Zn(2+) is bound at residue Asp104. Glu138 functions as the Proton acceptor in the catalytic mechanism. Zn(2+) is bound by residues Glu139, Glu167, and His353.

This sequence belongs to the peptidase M20A family. DapE subfamily. Homodimer. Zn(2+) is required as a cofactor. Requires Co(2+) as cofactor.

It carries out the reaction N-succinyl-(2S,6S)-2,6-diaminopimelate + H2O = (2S,6S)-2,6-diaminopimelate + succinate. It functions in the pathway amino-acid biosynthesis; L-lysine biosynthesis via DAP pathway; LL-2,6-diaminopimelate from (S)-tetrahydrodipicolinate (succinylase route): step 3/3. Functionally, catalyzes the hydrolysis of N-succinyl-L,L-diaminopimelic acid (SDAP), forming succinate and LL-2,6-diaminopimelate (DAP), an intermediate involved in the bacterial biosynthesis of lysine and meso-diaminopimelic acid, an essential component of bacterial cell walls. This chain is Succinyl-diaminopimelate desuccinylase, found in Aromatoleum aromaticum (strain DSM 19018 / LMG 30748 / EbN1) (Azoarcus sp. (strain EbN1)).